A 471-amino-acid polypeptide reads, in one-letter code: Glutamate--tRNA ligase (471 aa).

A 'HIGH' region motif is present at residues 10 to 20 (PSPTGFLHIGG). Positions 117 to 137 (GRPPRYDGRWRDRPASERPTD) are disordered. The 'KMSKS' region signature appears at 239 to 243 (KLSKR). Residue Lys242 participates in ATP binding.

This sequence belongs to the class-I aminoacyl-tRNA synthetase family. Glutamate--tRNA ligase type 1 subfamily. Monomer.

It is found in the cytoplasm. It catalyses the reaction tRNA(Glu) + L-glutamate + ATP = L-glutamyl-tRNA(Glu) + AMP + diphosphate. In terms of biological role, catalyzes the attachment of glutamate to tRNA(Glu) in a two-step reaction: glutamate is first activated by ATP to form Glu-AMP and then transferred to the acceptor end of tRNA(Glu). This is Glutamate--tRNA ligase from Azorhizobium caulinodans (strain ATCC 43989 / DSM 5975 / JCM 20966 / LMG 6465 / NBRC 14845 / NCIMB 13405 / ORS 571).